The following is a 925-amino-acid chain: Centrosomal protein of 104 kDa (925 aa).

Positions 209–289 form a coiled coil; the sequence is EVAQIIRKLD…RAEVYEQLEL (81 aa). HEAT repeat units lie at residues 529–567 and 604–640; these read TIPV…LQII and GFTI…YRQH. Positions 677–725 form a coiled coil; that stretch reads DAEMRARRKAATEEAEKQKKEEIKALQGQLAALKEIQAEVQEKESDAVK. Positions 883–925 are disordered; the sequence is PALQPGKSSAVAASGPLGSKAGSKIPTPKGGLSKSSSRTYAKR. Positions 915 to 925 are enriched in polar residues; it reads SKSSSRTYAKR.

As to quaternary structure, interacts with CCP110 and CEP97. Interacts with ARMC9, TOGARAM1, CCDC66 and CSPP1.

It localises to the cell projection. It is found in the cilium. The protein resides in the cytoplasm. Its subcellular location is the cytoskeleton. The protein localises to the microtubule organizing center. It localises to the centrosome. It is found in the centriole. The protein resides in the spindle pole. In terms of biological role, required for ciliogenesis and for structural integrity at the ciliary tip. The polypeptide is Centrosomal protein of 104 kDa (CEP104) (Homo sapiens (Human)).